Here is a 254-residue protein sequence, read N- to C-terminus: Phosphoribosylaminoimidazole-succinocarboxamide synthase (254 aa).

The protein belongs to the SAICAR synthetase family.

It carries out the reaction 5-amino-1-(5-phospho-D-ribosyl)imidazole-4-carboxylate + L-aspartate + ATP = (2S)-2-[5-amino-1-(5-phospho-beta-D-ribosyl)imidazole-4-carboxamido]succinate + ADP + phosphate + 2 H(+). It participates in purine metabolism; IMP biosynthesis via de novo pathway; 5-amino-1-(5-phospho-D-ribosyl)imidazole-4-carboxamide from 5-amino-1-(5-phospho-D-ribosyl)imidazole-4-carboxylate: step 1/2. The protein is Phosphoribosylaminoimidazole-succinocarboxamide synthase of Gluconobacter oxydans (strain 621H) (Gluconobacter suboxydans).